A 465-amino-acid polypeptide reads, in one-letter code: ATP synthase subunit beta (465 aa).

152 to 159 (GGAGVGKT) contacts ATP.

This sequence belongs to the ATPase alpha/beta chains family. In terms of assembly, F-type ATPases have 2 components, CF(1) - the catalytic core - and CF(0) - the membrane proton channel. CF(1) has five subunits: alpha(3), beta(3), gamma(1), delta(1), epsilon(1). CF(0) has three main subunits: a(1), b(2) and c(9-12). The alpha and beta chains form an alternating ring which encloses part of the gamma chain. CF(1) is attached to CF(0) by a central stalk formed by the gamma and epsilon chains, while a peripheral stalk is formed by the delta and b chains.

The protein localises to the cell membrane. The enzyme catalyses ATP + H2O + 4 H(+)(in) = ADP + phosphate + 5 H(+)(out). Its function is as follows. Produces ATP from ADP in the presence of a proton gradient across the membrane. The catalytic sites are hosted primarily by the beta subunits. The chain is ATP synthase subunit beta from Desulfitobacterium hafniense (strain Y51).